A 1158-amino-acid chain; its full sequence is ATP-dependent helicase/deoxyribonuclease subunit B (1158 aa).

One can recognise a UvrD-like helicase ATP-binding domain in the interval 1–275 (MTLHAYLGRA…QYFNQLYRFN (275 aa)). 8 to 15 (GRAGTGKS) is an ATP binding site. The region spanning 269-583 (NQLYRFNNQD…SIGTMDLAKV (315 aa)) is the UvrD-like helicase C-terminal domain. Residues cysteine 784, cysteine 1112, cysteine 1115, and cysteine 1121 each contribute to the [4Fe-4S] cluster site.

This sequence belongs to the helicase family. AddB/RexB type 1 subfamily. In terms of assembly, heterodimer of AddA and AddB. It depends on Mg(2+) as a cofactor. [4Fe-4S] cluster serves as cofactor.

The heterodimer acts as both an ATP-dependent DNA helicase and an ATP-dependent, dual-direction single-stranded exonuclease. Recognizes the chi site generating a DNA molecule suitable for the initiation of homologous recombination. The AddB subunit has 5' -&gt; 3' nuclease activity but not helicase activity. In Staphylococcus aureus (strain MRSA252), this protein is ATP-dependent helicase/deoxyribonuclease subunit B.